The sequence spans 144 residues: Putative golgin subfamily A member 2B (144 aa).

Disordered stretches follow at residues 1–20 (MDSE…PEDL) and 95–132 (SCGR…EAAG). Gly residues predominate over residues 110–131 (AEGGGVHQQAGPGQGRGEGEAA).

It belongs to the GOLGA2 family.

This is Putative golgin subfamily A member 2B (GOLGA2P5) from Homo sapiens (Human).